A 228-amino-acid polypeptide reads, in one-letter code: Woronin body membrane protein wscA (228 aa).

Transmembrane regions (helical) follow at residues 89–109, 130–150, 162–182, and 185–205; these read MTLY…GILQ, LIVS…IAGA, AGFM…LAFA, and FLPE…IGTY.

It belongs to the peroxisomal membrane protein PXMP2/4 family. In terms of assembly, self-assembles into detergent-resistant oligomers and forms a complex with hexA assemblies.

The protein resides in the peroxisome membrane. Its subcellular location is the cell septum. Woronin sorting complex protein involved in both Woronin bodies (WB) formation and inherence. Localizes to large peroxisome membranes where it self-assembles into detergent-resistant oligomers that envelop hex-1 assemblies, producing asymmetrical nascent WBs. These structures are then delivered to the cell cortex, which permits partitioning of the nascent WB and WB inheritance. The chain is Woronin body membrane protein wscA from Aspergillus fumigatus (strain ATCC MYA-4609 / CBS 101355 / FGSC A1100 / Af293) (Neosartorya fumigata).